The primary structure comprises 773 residues: Leucine-rich repeat and calponin homology domain-containing protein 2 (773 aa).

The segment at 1–46 (MAASQGGGGNSGGGGCSGGGSGGGGGAAGGGGGGGGGGGGGAGAGG) is disordered. LRR repeat units lie at residues 97 to 118 (NSGILSLSGRKLREFPGSGYDL), 120 to 141 (DTTQADLSRNRFTEIPSDVWLF), 143 to 164 (PLETLNLYHNCIKTIPEAIKNL), 166 to 187 (MLTYLNISRNLLSTLPKYLFDL), 188 to 209 (PLKVLVVSNNKLVSIPEEIGKL), 211 to 232 (DLMELDVSCNEIQVLPQQMGKL), 234 to 256 (SLKELNIRRNNLHVLPDELGDLP), 257 to 277 (LVKLDFSCNKVTEIPVCYRKL), and 279 to 300 (HLQVIILDNNPLQVPPAQICLK). Disordered regions lie at residues 324 to 409 (LDLP…QKDQ), 438 to 478 (FLKG…LKEV), and 573 to 633 (KYKS…SRQE). 2 stretches are compositionally biased toward basic and acidic residues: residues 386–396 (SNREQTSRNDS) and 440–466 (KGKEKSSEKSQKNEEPPNEKKVDKEQL). Residues 594–603 (AHMSAQSPVS) show a composition bias toward polar residues. Residues 650–763 (LREEREQIRQ…VTVQALLELP (114 aa)) enclose the Calponin-homology (CH) domain.

Functionally, may play a role in the organization of the cytoskeleton. The protein is Leucine-rich repeat and calponin homology domain-containing protein 2 (Lrch2) of Mus musculus (Mouse).